The primary structure comprises 373 residues: Unsaturated rhamnogalacturonyl hydrolase YteR (373 aa).

Residues 40–41, Asp88, and 132–136 each bind substrate; these read HY and HKDGY. The Proton donor role is filled by Asp143. Substrate contacts are provided by residues 213–217 and 333–334; these read RSIGW and TS.

The protein belongs to the glycosyl hydrolase 105 family. Monomer.

Its subcellular location is the cytoplasm. It carries out the reaction 2-O-(4-deoxy-beta-L-threo-hex-4-enopyranuronosyl)-alpha-L-rhamnose + H2O = 5-dehydro-4-deoxy-D-glucuronate + L-rhamnopyranose. In terms of biological role, catalyzes the hydrolysis of unsaturated rhamnogalacturonan disaccharide to yield unsaturated D-galacturonic acid and L-rhamnose. It cannot act on unsaturated glucuronyl hydrolase (UGL) substrates containing unsaturated D-glucuronic acid at the non-reducing terminus, although the active pockets of YesR and UGL are very similar. This chain is Unsaturated rhamnogalacturonyl hydrolase YteR (yteR), found in Bacillus subtilis (strain 168).